The sequence spans 401 residues: Probable cysteine desulfurase (401 aa).

Lysine 219 is subject to N6-(pyridoxal phosphate)lysine. Cysteine 358 functions as the Cysteine persulfide intermediate in the catalytic mechanism.

This sequence belongs to the class-V pyridoxal-phosphate-dependent aminotransferase family. Csd subfamily. Pyridoxal 5'-phosphate is required as a cofactor.

It catalyses the reaction (sulfur carrier)-H + L-cysteine = (sulfur carrier)-SH + L-alanine. Functionally, catalyzes the removal of elemental sulfur and selenium atoms from L-cysteine, L-cystine, L-selenocysteine, and L-selenocystine to produce L-alanine. This is Probable cysteine desulfurase (csd) from Chlamydia trachomatis serovar D (strain ATCC VR-885 / DSM 19411 / UW-3/Cx).